Here is a 945-residue protein sequence, read N- to C-terminus: Kinesin-like protein KIN-7F (945 aa).

In terms of domain architecture, Kinesin motor spans 34–356 (RILVSVRLRP…LLFASCAKEV (323 aa)). 120–127 (GQTSSGKT) is a binding site for ATP. Positions 365–437 (VMSDKALVKQ…QDLLQVVGDN (73 aa)) form a coiled coil. Disordered regions lie at residues 484-512 (RRVA…SVSS) and 553-588 (NECL…MNSR). Composition is skewed to polar residues over residues 495 to 512 (QAEN…SVSS) and 560 to 587 (AVGS…SMNS).

Belongs to the TRAFAC class myosin-kinesin ATPase superfamily. Kinesin family. KIN-7 subfamily. In terms of assembly, binds microtubules.

Binds ATP/ADP in vitro. Possesses low ATPase activity but high affinity for microtubules. The sequence is that of Kinesin-like protein KIN-7F from Oryza sativa subsp. japonica (Rice).